A 312-amino-acid chain; its full sequence is Tyrosine recombinase XerC (312 aa).

Residues 1–103 (MISAFYAFLD…AIKSFSQYCI (103 aa)) enclose the Core-binding (CB) domain. Positions 124–306 (ELPSPITYEQ…SMKLKKQTHE (183 aa)) constitute a Tyr recombinase domain. Active-site residues include R164, K188, H258, R261, and H284. Y293 serves as the catalytic O-(3'-phospho-DNA)-tyrosine intermediate.

The protein belongs to the 'phage' integrase family. XerC subfamily. As to quaternary structure, forms a cyclic heterotetrameric complex composed of two molecules of XerC and two molecules of XerD.

Its subcellular location is the cytoplasm. In terms of biological role, site-specific tyrosine recombinase, which acts by catalyzing the cutting and rejoining of the recombining DNA molecules. The XerC-XerD complex is essential to convert dimers of the bacterial chromosome into monomers to permit their segregation at cell division. It also contributes to the segregational stability of plasmids. The chain is Tyrosine recombinase XerC from Chlamydia caviae (strain ATCC VR-813 / DSM 19441 / 03DC25 / GPIC) (Chlamydophila caviae).